A 217-amino-acid polypeptide reads, in one-letter code: GTPase IMAP family member GIMD1 (217 aa).

In terms of domain architecture, AIG1-type G spans 6 to 217 (KMIINLAVFG…ENHFQVLSLA (212 aa)). GTP is bound by residues 15–23 (GRTQSGKSS), Ser-36, and 148–150 (HAE).

The protein belongs to the TRAFAC class TrmE-Era-EngA-EngB-Septin-like GTPase superfamily. AIG1/Toc34/Toc159-like paraseptin GTPase family. IAN subfamily.

The chain is GTPase IMAP family member GIMD1 (Gimd1) from Mus musculus (Mouse).